A 1075-amino-acid polypeptide reads, in one-letter code: DNA-directed RNA polymerase subunit beta (1075 aa).

This sequence belongs to the RNA polymerase beta chain family. In terms of assembly, in plastids the minimal PEP RNA polymerase catalytic core is composed of four subunits: alpha, beta, beta', and beta''. When a (nuclear-encoded) sigma factor is associated with the core the holoenzyme is formed, which can initiate transcription.

Its subcellular location is the plastid. It localises to the chloroplast. The catalysed reaction is RNA(n) + a ribonucleoside 5'-triphosphate = RNA(n+1) + diphosphate. DNA-dependent RNA polymerase catalyzes the transcription of DNA into RNA using the four ribonucleoside triphosphates as substrates. The chain is DNA-directed RNA polymerase subunit beta from Saccharum officinarum (Sugarcane).